The chain runs to 624 residues: Prickle planar cell polarity protein 3 (624 aa).

A compositionally biased stretch (basic residues) spans 1–12; the sequence is MFARGSRRRRSG. Residues 1–26 form a disordered region; it reads MFARGSRRRRSGRAPPEAEDPARGQP. The PET domain occupies 74–182; the sequence is SDFQRHSISD…TVRIFPVTIT (109 aa). 3 consecutive LIM zinc-binding domains span residues 184–249, 250–309, and 310–373; these read AICE…CLRP, RCQA…RHAE, and YCDG…SETT. The interval 371–617 is disordered; sequence ETTAPGPGRR…SHPVMPRQTR (247 aa). Residues 383-409 show a composition bias toward low complexity; that stretch reads SAGTVTTPLTTSTASFSATEGTSETAS. Residues 447–458 show a composition bias toward pro residues; the sequence is PEPPTESPGHPA. Phosphoserine is present on residues Ser-475 and Ser-491. Positions 509–541 are enriched in basic residues; it reads SCHHHHHHRRRRQRHRRRGSHHHHHHPGRHGHH. A compositionally biased stretch (low complexity) spans 545–564; it reads LGSGSDSGSCSSSPSSPSSE. Residues 587-601 are compositionally biased toward polar residues; sequence RTTQDTSTETFNSPA.

The protein belongs to the prickle / espinas / testin family. As to quaternary structure, interacts with VANGL2 via its C-terminus. The VANGL2-dependent membrane recruitment of PRICKLE3 is a prerequisite for its polarization. Interacts with WTIP. WTIP is involved in the recruitment of PRICKLE3 to the basal body. Interacts with MT-ATP8, a component of the mitochondrial complex V. As to expression, widely expressed.

The protein resides in the cytoplasm. The protein localises to the cell membrane. Its subcellular location is the mitochondrion. Its function is as follows. Involved in the planar cell polarity (PCP) pathway that is essential for the polarization of epithelial cells during morphogenetic processes, including gastrulation and neurulation. PCP is maintained by two molecular modules, the global and the core modules, PRICKLE3 being part of the core module. Distinct complexes of the core module segregate to opposite sides of the cell, where they interact with the opposite complex in the neighboring cell at or near the adherents junctions. Involved in the organization of the basal body. Involved in cilia growth and positioning. Required for proper assembly, stability, and function of mitochondrial membrane ATP synthase (mitochondrial complex V). The protein is Prickle planar cell polarity protein 3 of Mus musculus (Mouse).